Consider the following 409-residue polypeptide: NADH-quinone oxidoreductase subunit D 1 (409 aa).

Belongs to the complex I 49 kDa subunit family. NDH-1 is composed of 14 different subunits. Subunits NuoB, C, D, E, F, and G constitute the peripheral sector of the complex.

The protein localises to the cell inner membrane. The enzyme catalyses a quinone + NADH + 5 H(+)(in) = a quinol + NAD(+) + 4 H(+)(out). Functionally, NDH-1 shuttles electrons from NADH, via FMN and iron-sulfur (Fe-S) centers, to quinones in the respiratory chain. The immediate electron acceptor for the enzyme in this species is believed to be ubiquinone. Couples the redox reaction to proton translocation (for every two electrons transferred, four hydrogen ions are translocated across the cytoplasmic membrane), and thus conserves the redox energy in a proton gradient. This chain is NADH-quinone oxidoreductase subunit D 1, found in Solibacter usitatus (strain Ellin6076).